The primary structure comprises 283 residues: Nucleotide-binding protein DR_1434 (283 aa).

Residue G8–S15 participates in ATP binding. Residue D57–T60 participates in GTP binding.

The protein belongs to the RapZ-like family.

Functionally, displays ATPase and GTPase activities. This is Nucleotide-binding protein DR_1434 from Deinococcus radiodurans (strain ATCC 13939 / DSM 20539 / JCM 16871 / CCUG 27074 / LMG 4051 / NBRC 15346 / NCIMB 9279 / VKM B-1422 / R1).